The sequence spans 504 residues: MQQSTPYLSFRGIGKTFPGVKALTDISFDCYAGQVHALMGENGAGKSTLLKILSGNYAPTTGSVVINGQEMSFSDTTAALNAGVAIIYQELHLVPEMTVAENIYLGQLPHKGGIVNRSLLNYEAGLQIKHLGMDIDPDTPLKYLSIGQWQMVEIAKALARNAKIIAFDEPTSSLSAREIDNLFRVIRELRKEGRVILYVSHRMEEIFALSDAITVFKDGRYVKTFTDMQQVDHDALVQAMVGRDIGDIYGWQPRSYGEERLRLDAVKAPGVRTPISLAVRSGEIVGLFGLVGAGRSELMKGMFGGTQITAGQVYIDQQPIDIRKPSHAIAAGMMLCPEDRKAEGIIPVHSVRDNINISARRKHVLGGCVINNGWEENNADHHIRSLNIKTPGAEQLIMNLSGGNQQKAILGRWLSEEMKVILLDEPTRGIDVGAKHEIYNVIYALAAQGVAVLFASSDLPEVLGVADRIVVMREGEIAGELLHEQADERQALSLAMPKVSQAVA.

2 consecutive ABC transporter domains span residues 8–243 (LSFR…MVGR) and 256–499 (YGEE…MPKV). 40-47 (GENGAGKS) serves as a coordination point for ATP.

It belongs to the ABC transporter superfamily. Arabinose importer (TC 3.A.1.2.2) family. In terms of assembly, the complex is composed of two ATP-binding proteins (AraG), two transmembrane proteins (AraH) and a solute-binding protein (AraF).

It is found in the cell inner membrane. It carries out the reaction L-arabinose(out) + ATP + H2O = L-arabinose(in) + ADP + phosphate + H(+). In terms of biological role, part of the ABC transporter complex AraFGH involved in arabinose import. Responsible for energy coupling to the transport system. The polypeptide is Arabinose import ATP-binding protein AraG (Escherichia coli (strain UTI89 / UPEC)).